The following is a 388-amino-acid chain: MVTVGEVRKAQRAEGPATILAIGTATPANCVNQSTYPDYYFRITNSEHKTELKEKFQRMCDKSMITKRYMHLTEEILKENPSFCEYMAPSLDARQDIAVVEVPKLGKEAAQSAIKGWGQPKSKITHVVFCTTSGVDMPGADYQLTKLLGLRPSVKRLMMYQQGCFAGGTVLRLAKDLAENNKGARVLIVCSEITVVTFRGPSEAHLDSLVGQALFGDGAAAVIVGADPTPAEKPLFQLVSAAQTLAPDSCGAIDGHLREVGLTFHLLKDVPSVVSNNIEKCLFEAFNPLGISDWNSVFWIAHPGGPAILDQVEDKLGLKPEKLRATRHVLSEYGNMSSACVLFILDEMRKASSNDGLGTTGEGLEWGVLFGFGPGLTIETVVLHSVPT.

Cys164 is a catalytic residue.

The protein belongs to the thiolase-like superfamily. Chalcone/stilbene synthases family.

The catalysed reaction is (E)-4-coumaroyl-CoA + 3 malonyl-CoA + 3 H(+) = 2',4,4',6'-tetrahydroxychalcone + 3 CO2 + 4 CoA. Its pathway is secondary metabolite biosynthesis; flavonoid biosynthesis. Functionally, the primary product of this enzyme is 4,2',4',6'-tetrahydroxychalcone (also termed naringenin-chalcone or chalcone) which can under specific conditions spontaneously isomerize into naringenin. The polypeptide is Chalcone synthase LF3 (CHS-LF3) (Ipomoea batatas (Sweet potato)).